The following is a 92-amino-acid chain: Small ribosomal subunit protein uS19 (92 aa).

This sequence belongs to the universal ribosomal protein uS19 family.

Protein S19 forms a complex with S13 that binds strongly to the 16S ribosomal RNA. In Rickettsia bellii (strain OSU 85-389), this protein is Small ribosomal subunit protein uS19.